Here is a 304-residue protein sequence, read N- to C-terminus: Small ribosomal subunit protein uS3 (304 aa).

The KH type-2 domain occupies 17–86; that stretch reads MDEYFAKQLS…NPQIDAQEVK (70 aa).

Belongs to the universal ribosomal protein uS3 family. In terms of assembly, part of the 30S ribosomal subunit.

Binds the lower part of the 30S subunit head. The polypeptide is Small ribosomal subunit protein uS3 (Methanococcoides burtonii (strain DSM 6242 / NBRC 107633 / OCM 468 / ACE-M)).